The chain runs to 337 residues: Ribosomal RNA small subunit methyltransferase H (337 aa).

Residues 33–35 (AGH), D53, D101, and Q108 each bind S-adenosyl-L-methionine.

This sequence belongs to the methyltransferase superfamily. RsmH family.

Its subcellular location is the cytoplasm. It catalyses the reaction cytidine(1402) in 16S rRNA + S-adenosyl-L-methionine = N(4)-methylcytidine(1402) in 16S rRNA + S-adenosyl-L-homocysteine + H(+). Its function is as follows. Specifically methylates the N4 position of cytidine in position 1402 (C1402) of 16S rRNA. This is Ribosomal RNA small subunit methyltransferase H from Herpetosiphon aurantiacus (strain ATCC 23779 / DSM 785 / 114-95).